Consider the following 270-residue polypeptide: Acyl-[acyl-carrier-protein]--UDP-N-acetylglucosamine O-acyltransferase (270 aa).

Substrate is bound by residues 69-72 (QDLK), His-121, His-140, and Gln-157.

This sequence belongs to the transferase hexapeptide repeat family. LpxA subfamily. As to quaternary structure, homotrimer.

It is found in the cytoplasm. The catalysed reaction is a (3R)-hydroxyacyl-[ACP] + UDP-N-acetyl-alpha-D-glucosamine = a UDP-3-O-[(3R)-3-hydroxyacyl]-N-acetyl-alpha-D-glucosamine + holo-[ACP]. It participates in glycolipid biosynthesis; lipid IV(A) biosynthesis; lipid IV(A) from (3R)-3-hydroxytetradecanoyl-[acyl-carrier-protein] and UDP-N-acetyl-alpha-D-glucosamine: step 1/6. Involved in the biosynthesis of lipid A, a phosphorylated glycolipid that anchors the lipopolysaccharide to the outer membrane of the cell. The chain is Acyl-[acyl-carrier-protein]--UDP-N-acetylglucosamine O-acyltransferase from Helicobacter pylori (strain ATCC 700392 / 26695) (Campylobacter pylori).